Reading from the N-terminus, the 154-residue chain is SsrA-binding protein (154 aa).

The protein belongs to the SmpB family.

The protein resides in the cytoplasm. Functionally, required for rescue of stalled ribosomes mediated by trans-translation. Binds to transfer-messenger RNA (tmRNA), required for stable association of tmRNA with ribosomes. tmRNA and SmpB together mimic tRNA shape, replacing the anticodon stem-loop with SmpB. tmRNA is encoded by the ssrA gene; the 2 termini fold to resemble tRNA(Ala) and it encodes a 'tag peptide', a short internal open reading frame. During trans-translation Ala-aminoacylated tmRNA acts like a tRNA, entering the A-site of stalled ribosomes, displacing the stalled mRNA. The ribosome then switches to translate the ORF on the tmRNA; the nascent peptide is terminated with the 'tag peptide' encoded by the tmRNA and targeted for degradation. The ribosome is freed to recommence translation, which seems to be the essential function of trans-translation. The protein is SsrA-binding protein of Synechococcus sp. (strain JA-3-3Ab) (Cyanobacteria bacterium Yellowstone A-Prime).